Consider the following 294-residue polypeptide: tRNA dimethylallyltransferase (294 aa).

9–16 (GPTASGKS) is an ATP binding site. 11 to 16 (TASGKS) is a substrate binding site. Residues 155 to 159 (QRVIR) are interaction with substrate tRNA.

This sequence belongs to the IPP transferase family. Monomer. The cofactor is Mg(2+).

It catalyses the reaction adenosine(37) in tRNA + dimethylallyl diphosphate = N(6)-dimethylallyladenosine(37) in tRNA + diphosphate. Catalyzes the transfer of a dimethylallyl group onto the adenine at position 37 in tRNAs that read codons beginning with uridine, leading to the formation of N6-(dimethylallyl)adenosine (i(6)A). The sequence is that of tRNA dimethylallyltransferase from Leuconostoc citreum (strain KM20).